The sequence spans 633 residues: Chaperone protein DnaK (633 aa).

Thr-196 bears the Phosphothreonine; by autocatalysis mark. Positions 594-633 (NLYGQPGAEPQPETNGHAGGSKGGDGAVNAEYEVIDGDDK) are disordered. The span at 610 to 619 (HAGGSKGGDG) shows a compositional bias: gly residues.

Belongs to the heat shock protein 70 family.

In terms of biological role, acts as a chaperone. The protein is Chaperone protein DnaK of Chlorobaculum tepidum (strain ATCC 49652 / DSM 12025 / NBRC 103806 / TLS) (Chlorobium tepidum).